The sequence spans 129 residues: Follitropin subunit beta (129 aa).

The first 20 residues, 1-20 (MKTAQFYVLFFCWKAIWCNG), serve as a signal peptide directing secretion. 6 disulfides stabilise this stretch: Cys-21-Cys-69, Cys-35-Cys-84, Cys-38-Cys-122, Cys-46-Cys-100, Cys-50-Cys-102, and Cys-105-Cys-112. 2 N-linked (GlcNAc...) asparagine glycosylation sites follow: Asn-25 and Asn-42.

It belongs to the glycoprotein hormones subunit beta family. Heterodimer. The active follitropin is a heterodimer composed of an alpha chain/CGA shared with other hormones and a unique beta chain/FSHB shown here.

It is found in the secreted. Together with the alpha chain CGA constitutes follitropin, the follicle-stimulating hormone, and provides its biological specificity to the hormone heterodimer. Binds FSHR, a G protein-coupled receptor, on target cells to activate downstream signaling pathways. Follitropin is involved in follicle development and spermatogenesis in reproductive organs. The chain is Follitropin subunit beta (FSHB) from Trichosurus vulpecula (Brush-tailed possum).